Consider the following 406-residue polypeptide: S-adenosylmethionine synthase (406 aa).

Histidine 16 provides a ligand contact to ATP. Aspartate 18 lines the Mg(2+) pocket. Glutamate 44 contributes to the K(+) binding site. L-methionine-binding residues include glutamate 57 and glutamine 109. A flexible loop region spans residues 109 to 119; that stretch reads QSPQIAQGVDE. ATP contacts are provided by residues 174 to 176, 249 to 250, aspartate 258, 264 to 265, alanine 281, and lysine 285; these read DAK, RF, and RK. An L-methionine-binding site is contributed by aspartate 258. Lysine 289 is a binding site for L-methionine.

This sequence belongs to the AdoMet synthase family. Homotetramer; dimer of dimers. Mg(2+) serves as cofactor. It depends on K(+) as a cofactor.

It is found in the cytoplasm. The enzyme catalyses L-methionine + ATP + H2O = S-adenosyl-L-methionine + phosphate + diphosphate. Its pathway is amino-acid biosynthesis; S-adenosyl-L-methionine biosynthesis; S-adenosyl-L-methionine from L-methionine: step 1/1. Its function is as follows. Catalyzes the formation of S-adenosylmethionine (AdoMet) from methionine and ATP. The overall synthetic reaction is composed of two sequential steps, AdoMet formation and the subsequent tripolyphosphate hydrolysis which occurs prior to release of AdoMet from the enzyme. The chain is S-adenosylmethionine synthase from Sphingopyxis alaskensis (strain DSM 13593 / LMG 18877 / RB2256) (Sphingomonas alaskensis).